The primary structure comprises 416 residues: UDP-N-acetylmuramoylalanine--D-glutamate ligase (416 aa).

104 to 110 (GSNGKST) provides a ligand contact to ATP.

The protein belongs to the MurCDEF family.

The protein localises to the cytoplasm. It catalyses the reaction UDP-N-acetyl-alpha-D-muramoyl-L-alanine + D-glutamate + ATP = UDP-N-acetyl-alpha-D-muramoyl-L-alanyl-D-glutamate + ADP + phosphate + H(+). It participates in cell wall biogenesis; peptidoglycan biosynthesis. Cell wall formation. Catalyzes the addition of glutamate to the nucleotide precursor UDP-N-acetylmuramoyl-L-alanine (UMA). In Francisella tularensis subsp. tularensis (strain WY96-3418), this protein is UDP-N-acetylmuramoylalanine--D-glutamate ligase.